The sequence spans 225 residues: 7-cyano-7-deazaguanine synthase (225 aa).

Residue 10 to 20 coordinates ATP; it reads VSGGLDSTTVI. 4 residues coordinate Zn(2+): C189, C199, C202, and C205.

It belongs to the QueC family. Zn(2+) is required as a cofactor.

It catalyses the reaction 7-carboxy-7-deazaguanine + NH4(+) + ATP = 7-cyano-7-deazaguanine + ADP + phosphate + H2O + H(+). It participates in purine metabolism; 7-cyano-7-deazaguanine biosynthesis. Its function is as follows. Catalyzes the ATP-dependent conversion of 7-carboxy-7-deazaguanine (CDG) to 7-cyano-7-deazaguanine (preQ(0)). The polypeptide is 7-cyano-7-deazaguanine synthase (Cellvibrio japonicus (strain Ueda107) (Pseudomonas fluorescens subsp. cellulosa)).